The sequence spans 196 residues: Phosphoheptose isomerase (196 aa).

The SIS domain occupies 36–196 (MVACLMNEGK…AVDYMLLGGD (161 aa)). A substrate-binding site is contributed by 51–53 (NGG). Residues H60 and E64 each contribute to the Zn(2+) site. Substrate-binding positions include E64, 93 to 94 (ND), 119 to 121 (STS), S124, and Q174. Residues Q174 and H182 each contribute to the Zn(2+) site.

Belongs to the SIS family. GmhA subfamily. Homotetramer. Requires Zn(2+) as cofactor.

The protein localises to the cytoplasm. It catalyses the reaction 2 D-sedoheptulose 7-phosphate = D-glycero-alpha-D-manno-heptose 7-phosphate + D-glycero-beta-D-manno-heptose 7-phosphate. The protein operates within carbohydrate biosynthesis; D-glycero-D-manno-heptose 7-phosphate biosynthesis; D-glycero-alpha-D-manno-heptose 7-phosphate and D-glycero-beta-D-manno-heptose 7-phosphate from sedoheptulose 7-phosphate: step 1/1. In terms of biological role, catalyzes the isomerization of sedoheptulose 7-phosphate in D-glycero-D-manno-heptose 7-phosphate. The chain is Phosphoheptose isomerase from Laribacter hongkongensis (strain HLHK9).